A 452-amino-acid chain; its full sequence is tRNA-2-methylthio-N(6)-dimethylallyladenosine synthase (452 aa).

The 117-residue stretch at 5 to 121 folds into the MTTase N-terminal domain; it reads RRYHITTFGC…LADLLAQVEA (117 aa). Cys-14, Cys-50, Cys-84, Cys-156, Cys-160, and Cys-163 together coordinate [4Fe-4S] cluster. Positions 142-379 constitute a Radical SAM core domain; it reads RDSTITAWVN…NHLVAQMAAD (238 aa). Residues 382 to 446 form the TRAM domain; sequence QRYLGRTEEV…AFSLTGQILS (65 aa).

This sequence belongs to the methylthiotransferase family. MiaB subfamily. Monomer. Requires [4Fe-4S] cluster as cofactor.

The protein localises to the cytoplasm. It catalyses the reaction N(6)-dimethylallyladenosine(37) in tRNA + (sulfur carrier)-SH + AH2 + 2 S-adenosyl-L-methionine = 2-methylsulfanyl-N(6)-dimethylallyladenosine(37) in tRNA + (sulfur carrier)-H + 5'-deoxyadenosine + L-methionine + A + S-adenosyl-L-homocysteine + 2 H(+). Catalyzes the methylthiolation of N6-(dimethylallyl)adenosine (i(6)A), leading to the formation of 2-methylthio-N6-(dimethylallyl)adenosine (ms(2)i(6)A) at position 37 in tRNAs that read codons beginning with uridine. The protein is tRNA-2-methylthio-N(6)-dimethylallyladenosine synthase of Synechococcus elongatus (strain ATCC 33912 / PCC 7942 / FACHB-805) (Anacystis nidulans R2).